A 610-amino-acid chain; its full sequence is Zinc metalloproteinase-disintegrin-like acurhagin (610 aa).

The signal sequence occupies residues 1 to 20 (MIQVLLVTICLAAFPYQGSS). Residues 21–191 (IILESGDVND…ISQLNLIPEQ (171 aa)) constitute a propeptide that is removed on maturation. Residue Gln192 is modified to Pyrrolidone carboxylic acid. In terms of domain architecture, Peptidase M12B spans 198–394 (KYVETVVVVD…HNPECIDNEP (197 aa)). Positions 201 and 285 each coordinate Ca(2+). 3 cysteine pairs are disulfide-bonded: Cys309-Cys389, Cys349-Cys373, and Cys351-Cys356. His334 contributes to the Zn(2+) binding site. Glu335 is a catalytic residue. Zn(2+) contacts are provided by His338 and His344. The N-linked (GlcNAc...) asparagine glycan is linked to Asn372. The Ca(2+) site is built by Cys389, Asn392, Asn407, Leu409, Glu411, Glu414, and Asp417. In terms of domain architecture, Disintegrin spans 402-488 (PPLCGNELLE…ECPADVFHKN (87 aa)). 14 disulfide bridges follow: Cys405-Cys434, Cys416-Cys429, Cys418-Cys424, Cys428-Cys451, Cys442-Cys448, Cys447-Cys473, Cys460-Cys480, Cys467-Cys499, Cys492-Cys504, Cys511-Cys561, Cys526-Cys572, Cys539-Cys549, Cys556-Cys598, and Cys592-Cys603. The D/ECD-tripeptide signature appears at 466–468 (ECD). 5 residues coordinate Ca(2+): Asp468, Pro469, Glu471, Asp483, and Val484.

The protein belongs to the venom metalloproteinase (M12B) family. P-III subfamily. P-IIIa sub-subfamily. Monomer. It depends on Zn(2+) as a cofactor. In terms of processing, N-glycosylated. As to expression, expressed by the venom gland.

The protein localises to the secreted. With respect to regulation, the proteinase activity is slightly enhanced by Ca(2+) and Mg(2+), but is completely inhibited by Zn(2+). Is completely inhibited by phenanthroline and EDTA. Not inhibited by PMSF. Snake venom zinc metalloprotease that causes hemorrhage and dose-dependently inhibits platelet aggregation triggered by collagen. This inhibition is due to its binding to glycoprotein VI (GP6) and collagen. The binding to GP6 results in inhibition of the signaling pathway (decrease of tyrosine phosphorylation of signaling proteins such as Syk, LAT, PI3-K and PLCgamma2). Preferentially cleaves alpha chain (FGA) of fibrinogen, followed by beta chain (FGB). Also degrades the extracellular matrix protein fibronectin (FN1), and cleaves collagen and von Willebrand factor (VWF). The protein is Zinc metalloproteinase-disintegrin-like acurhagin of Deinagkistrodon acutus (Hundred-pace snake).